We begin with the raw amino-acid sequence, 1403 residues long: Sushi, nidogen and EGF-like domain-containing protein 1 (1403 aa).

Residues 1–24 (MRRGAAWALLLAAALGLGARGVRA) form the signal peptide. Positions 103-258 (AFWADVDNRR…GRWAFRIDDA (156 aa)) constitute an NIDO domain. 3 consecutive EGF-like domains span residues 268–309 (TTSV…RRCH), 311–347 (DVNECASHPCQNGGTCTHGVNSFSCQCPAGFQGPTCE), and 349–385 (AQSPCDNKVCQNGGQCQAESSSAVCVCQAGYTGATCE). Cystine bridges form between Cys-272–Cys-284, Cys-278–Cys-297, Cys-299–Cys-308, Cys-315–Cys-326, Cys-320–Cys-335, Cys-337–Cys-346, Cys-353–Cys-364, Cys-358–Cys-373, Cys-375–Cys-384, Cys-391–Cys-402, Cys-396–Cys-411, Cys-413–Cys-422, Cys-433–Cys-444, Cys-438–Cys-453, Cys-455–Cys-464, Cys-472–Cys-480, Cys-474–Cys-488, and Cys-490–Cys-499. Asn-292 carries an N-linked (GlcNAc...) asparagine glycan. The EGF-like 4; calcium-binding domain maps to 387 to 423 (DVDECSSDPCLNGGSCVDLVGNYSCICVEPFEGPQCE). Asn-408 is a glycosylation site (N-linked (GlcNAc...) asparagine). 2 EGF-like domains span residues 429-465 (VPSPCLSNPCLNGGTCVDADQGYVCECPEGFMGLDCR) and 468-500 (ILNDCDCRNGGRCLGANTTICQCPPGFFGLLCE). The N-linked (GlcNAc...) asparagine glycan is linked to Asn-484. Residue Asn-536 is glycosylated (N-linked (GlcNAc...) asparagine). EGF-like domains follow at residues 541-577 (LPSPCDSDPCFNGGSCDAHEDSYTCECPRGFHGRHCE), 580-616 (RPHLCSSGPCRNGGTCKETGDEYRCTCPYRFTGRHCE), 619-655 (KPDSCASGPCHNGGTCFHYIGKYKCDCPPGFSGRHCE), and 657-693 (APSPCFRSPCMNGGICEDLGTDFSCHCQPGYTGHRCQ). Disulfide bonds link Cys-545-Cys-556, Cys-550-Cys-565, Cys-567-Cys-576, Cys-584-Cys-595, Cys-589-Cys-604, Cys-606-Cys-615, Cys-623-Cys-634, Cys-628-Cys-643, Cys-645-Cys-654, Cys-661-Cys-672, Cys-666-Cys-681, Cys-683-Cys-692, Cys-698-Cys-739, Cys-724-Cys-751, Cys-757-Cys-768, Cys-762-Cys-777, Cys-779-Cys-788, Cys-795-Cys-806, Cys-800-Cys-815, Cys-817-Cys-826, Cys-833-Cys-844, Cys-838-Cys-853, Cys-855-Cys-864, Cys-871-Cys-882, Cys-876-Cys-891, and Cys-893-Cys-902. One can recognise a Sushi domain in the interval 696-753 (VDCGQPEEVKHATMRLNGTRMGSVALYTCDPGFSLSVLSHMRVCQPQGVWSQPPQCIE). Asn-712 carries N-linked (GlcNAc...) asparagine glycosylation. The 37-residue stretch at 753–789 (EVDECQSQPCLHKGSCQDLIAGYQCLCSPGYEGVHCE) folds into the EGF-like 11; calcium-binding domain. In terms of domain architecture, EGF-like 12; calcium-binding spans 791-827 (ETDECQAQPCRNGGSCRDLPGAFICQCPEGFVGTHCE). EGF-like domains follow at residues 829 to 865 (EVDACASSPCQHGGRCEDGGGAYLCVCPEGFFGYNCE) and 867 to 903 (VSDPCFSSPCGGRGYCLASNGSHSCTCKVGYTGKDCT). N-linked (GlcNAc...) asparagine glycosylation is present at Asn-886. Fibronectin type-III domains are found at residues 908–1006 (PPTA…TRPR), 1007–1105 (PIED…TRPL), and 1106–1200 (PPAN…SPRD). Asn-977, Asn-1015, Asn-1109, Asn-1139, and Asn-1298 each carry an N-linked (GlcNAc...) asparagine glycan. The disordered stretch occupies residues 1295-1314 (LPKNNSKDTESTPGSCSEDT). The segment covering 1305 to 1314 (STPGSCSEDT) has biased composition (polar residues). Residues 1306–1342 (TPGSCSEDTCQNGGTCVPGANAHSCDCRPGFKGRHCE) form the EGF-like 15 domain. Disulfide bonds link Cys-1310-Cys-1321, Cys-1315-Cys-1330, and Cys-1332-Cys-1341.

In terms of processing, phosphorylated on serine and threonine residues. Post-translationally, N-glycosylated. Expressed in liver.

It localises to the secreted. The protein localises to the extracellular space. It is found in the extracellular matrix. This chain is Sushi, nidogen and EGF-like domain-containing protein 1, found in Rattus norvegicus (Rat).